An 839-amino-acid polypeptide reads, in one-letter code: Genome polyprotein (839 aa).

Polar residues predominate over residues 55–66 (TAEVGSHQSEPL). The interval 55-76 (TAEVGSHQSEPLKTSVDKPGSK) is disordered. Short sequence motifs ((L)YPX(n)L motif) lie at residues 167-171 (YPHGL) and 200-205 (YPVWEL). Over residues 496-510 (SGGFSTTVSTEQNVP) the composition is skewed to polar residues. Disordered stretches follow at residues 496–530 (SGGF…NKGK) and 773–792 (GDLE…RFES). The tract at residues 766-836 (MLDRIAGGDL…RKLKGLFSQS (71 aa)) is involved in P1-2A pentamerization. Over residues 780–792 (DDPRTDEDRRFES) the composition is skewed to basic and acidic residues.

Belongs to the picornaviridae polyprotein family. Homodimer. Homomultimer; probably interacts with membranes in a multimeric form. Seems to assemble into amyloid-like fibers. As to quaternary structure, homopentamer. Homooligomer. In terms of assembly, interacts with capsid protein VP2. Interacts with capsid protein VP3. Interacts with capsid protein VP1. Interacts with capsid protein VP3. As to quaternary structure, interacts with capsid protein VP1. Interacts with capsid protein VP2. Post-translationally, specific enzymatic cleavages by viral protease in vivo yield a variety of precursors and mature proteins. Polyprotein processing intermediates are produced, such as P1-2A which is a functional precursor of the structural proteins, VP0 which is a VP4-VP2 precursor, VP1-2A precursor, 3ABC precursor which is a stable and catalytically active precursor of 3A, 3B and 3C proteins, 3AB and 3CD precursors. The assembly signal 2A is removed from VP1-2A by a host protease, possibly host Cathepsin L. This cleavage occurs over a region of 3 amino-acids probably generating VP1 proteins with heterogeneous C-termini. During virion maturation, immature virions are rendered infectious following cleavage of VP0 into VP4 and VP2. This maturation seems to be an autocatalytic event triggered by the presence of RNA in the capsid and is followed by a conformational change of the particle. In terms of processing, the assembly signal 2A is removed from VP1-2A by a host protease, possibly host Cathepsin L in naked virions. This cleavage does not occur in enveloped virions. This cleavage occurs over a region of 3 amino-acids probably generating VP1 proteins with heterogeneous C-termini. Post-translationally, unlike other picornaviruses, does not seem to be myristoylated.

The protein localises to the virion. The protein resides in the host endosome. It is found in the host multivesicular body. Its subcellular location is the host membrane. Its function is as follows. Capsid proteins VP1, VP2, and VP3 form a closed capsid enclosing the viral positive strand RNA genome. All these proteins contain a beta-sheet structure called beta-barrel jelly roll. Together they form an icosahedral capsid (T=3) composed of 60 copies of each VP1, VP2, and VP3, with a diameter of approximately 300 Angstroms. VP1 is situated at the 12 fivefold axes, whereas VP2 and VP3 are located at the quasi-sixfold axes. The naked capsid interacts with the host receptor HAVCR1 to provide virion attachment to and probably entry into the target cell. In terms of biological role, VP0 precursor is a component of the immature procapsids. Plays a role in the assembly of the 12 pentamers into an icosahedral structure. Has not been detected in mature virions, supposedly owing to its small size. Functionally, precursor component of immature procapsids that corresponds to an extended form of the structural protein VP1. After maturation, possibly by the host Cathepsin L, the assembly signal 2A is cleaved to give rise to the mature VP1 protein. Its function is as follows. Affects membrane integrity and causes an increase in membrane permeability. In terms of biological role, functions as a viroporin. Affects membrane integrity and causes an increase in membrane permeability. Involved in host intracellular membrane rearrangements probably to give rise to the viral factories. Does not disrupt calcium homeostasis or glycoprotein trafficking. Antagonizes the innate immune response of the host by suppressing IFN-beta synthesis, which it achieves by interfering with the RIG-I/IFIH1 pathway. The chain is Genome polyprotein from Callithrix (Owl-faced monkey).